The chain runs to 59 residues: uncharacterized protein (59 aa).

This is an uncharacterized protein from Dictyostelium discoideum (Social amoeba).